The primary structure comprises 147 residues: Large ribosomal subunit protein bL9 (147 aa).

The protein belongs to the bacterial ribosomal protein bL9 family.

Functionally, binds to the 23S rRNA. This Clostridium novyi (strain NT) protein is Large ribosomal subunit protein bL9.